Here is a 141-residue protein sequence, read N- to C-terminus: Hemoglobin subunit alpha (141 aa).

In terms of domain architecture, Globin spans 1 to 141 (VLSPADKTNV…VSTVLTSKYR (141 aa)). A Phosphoserine modification is found at Ser-3. Residue Lys-7 is modified to N6-succinyllysine. The residue at position 8 (Thr-8) is a Phosphothreonine. Lys-11 carries the N6-succinyllysine modification. Residue Lys-16 is modified to N6-acetyllysine; alternate. Lys-16 carries the N6-succinyllysine; alternate modification. Tyr-24 is modified (phosphotyrosine). Ser-35 carries the post-translational modification Phosphoserine. At Lys-40 the chain carries N6-succinyllysine. The residue at position 49 (Ser-49) is a Phosphoserine. His-58 contributes to the O2 binding site. His-87 provides a ligand contact to heme b. A Phosphoserine modification is found at Ser-102. Thr-108 is subject to Phosphothreonine. A phosphoserine mark is found at Ser-124 and Ser-131. Phosphothreonine occurs at positions 134 and 137. Ser-138 bears the Phosphoserine mark.

Belongs to the globin family. In terms of assembly, heterotetramer of two alpha chains and two beta chains. As to expression, red blood cells.

In terms of biological role, involved in oxygen transport from the lung to the various peripheral tissues. Hemopressin acts as an antagonist peptide of the cannabinoid receptor CNR1. Hemopressin-binding efficiently blocks cannabinoid receptor CNR1 and subsequent signaling. The polypeptide is Hemoglobin subunit alpha (HBA) (Urocitellus parryii (Arctic ground squirrel)).